The chain runs to 344 residues: GTP 3',8-cyclase (344 aa).

The Radical SAM core domain occupies 19–245; the sequence is PFGRAVTYLR…DIPYRTGGPA (227 aa). A GTP-binding site is contributed by Arg28. Residues Cys35 and Cys39 each coordinate [4Fe-4S] cluster. Tyr41 contacts S-adenosyl-L-methionine. [4Fe-4S] cluster is bound at residue Cys42. Residue Arg77 coordinates GTP. Gly81 contacts S-adenosyl-L-methionine. Thr111 provides a ligand contact to GTP. S-adenosyl-L-methionine is bound at residue Ser135. Lys171 lines the GTP pocket. Met205 contributes to the S-adenosyl-L-methionine binding site. [4Fe-4S] cluster-binding residues include Cys268 and Cys271. Residue 273-275 participates in GTP binding; that stretch reads RVR. Cys285 serves as a coordination point for [4Fe-4S] cluster.

Belongs to the radical SAM superfamily. MoaA family. As to quaternary structure, monomer and homodimer. Requires [4Fe-4S] cluster as cofactor.

The enzyme catalyses GTP + AH2 + S-adenosyl-L-methionine = (8S)-3',8-cyclo-7,8-dihydroguanosine 5'-triphosphate + 5'-deoxyadenosine + L-methionine + A + H(+). It functions in the pathway cofactor biosynthesis; molybdopterin biosynthesis. Its function is as follows. Catalyzes the cyclization of GTP to (8S)-3',8-cyclo-7,8-dihydroguanosine 5'-triphosphate. This Brucella abortus (strain S19) protein is GTP 3',8-cyclase.